A 139-amino-acid chain; its full sequence is Large ribosomal subunit protein uL24 (139 aa).

The disordered stretch occupies residues 1 to 25 (MKRNTNVSSSRRKSRKAHFTASSGE).

The protein belongs to the universal ribosomal protein uL24 family.

This Dictyostelium discoideum (Social amoeba) protein is Large ribosomal subunit protein uL24 (rpl26).